Here is a 494-residue protein sequence, read N- to C-terminus: Glutamate decarboxylase 2 (494 aa).

Residue lysine 276 is modified to N6-(pyridoxal phosphate)lysine. Residues 463–494 form a calmodulin-binding region; that stretch reads VKEKKMEKEILMEVIVGWRKFVKERKKMNGVC.

This sequence belongs to the group II decarboxylase family. Homohexamer. Interacts with calmodulin. It depends on pyridoxal 5'-phosphate as a cofactor. In terms of tissue distribution, expressed in roots, inflorescence stems, flowers, siliques and leaves.

It catalyses the reaction L-glutamate + H(+) = 4-aminobutanoate + CO2. With respect to regulation, up-regulated by calmodulin binding at physiological pH. Functionally, catalyzes the conversion of glutamate to 4-aminobutanoate (GABA). The calmodulin-binding is calcium-dependent and it is proposed to directly or indirectly form a calcium regulated control of GABA biosynthesis. The chain is Glutamate decarboxylase 2 (GAD2) from Arabidopsis thaliana (Mouse-ear cress).